The chain runs to 479 residues: Hydrogenase-4 component D (479 aa).

The next 15 membrane-spanning stretches (helical) occupy residues 3 to 23, 30 to 50, 55 to 75, 80 to 100, 117 to 137, 168 to 188, 208 to 228, 238 to 258, 270 to 290, 300 to 320, 330 to 350, 369 to 389, 390 to 410, 411 to 431, and 458 to 478; these read NLAL…SFSP, WGVL…SAFY, VAVT…LVID, LILF…TGYL, AFLL…TLLG, ALLI…TLFL, LVYG…PMQA, TPIS…YIFA, VIGG…FLMY, LAWS…LSIF, IAYI…AGAL, LPLP…VPPF, NGFF…VEYW, ILLP…AWFI, and LVLI…ATWL.

This sequence belongs to the complex I subunit 5 family.

Its subcellular location is the cell inner membrane. Its function is as follows. Possible component of hydrogenase 4. This is Hydrogenase-4 component D from Escherichia coli (strain K12).